Reading from the N-terminus, the 377-residue chain is Caspase-4 (377 aa).

The segment at 1–59 (MAEDKHNKNPLKMLESLGKELISGLLDDFVEKNVLKLEEEEKKKIYDAKLQDKARVLVD) is required for LPS-binding. A propeptide spanning residues 1-80 (MAEDKHNKNP…VFVQTFLNID (80 aa)) is cleaved from the precursor. The CARD domain occupies 1–91 (MAEDKHNKNP…NSTSIKAPEE (91 aa)). The residue at position 83 (Ser83) is a Phosphoserine. Residues His210 and Cys258 contribute to the active site. The propeptide occupies 271–289 (SPPALADSFSQSSENLEED).

The protein belongs to the peptidase C14A family. In terms of assembly, heterotetramer that consists of two anti-parallel arranged heterodimers, each one formed by a 20 kDa (Caspase-4 subunit p20) and a 10 kDa (Caspase-4 subunit p10) subunit. Upon direct LPS-binding, forms large homooligomers, resulting in its activation. These oligomers are often referred to as 'non-canonical inflammasomes'. In its precursor form, interacts with TMEM214; this interaction is required for association with the endoplasmic reticulum membrane. Interacts with CASP1. Interacts with NOD2. Interacts with Serpinb1a, Serpinb1b and Serpinb1c; these interactions regulate CASP4 activity. Heterotetramer that consists of two anti-parallel arranged heterodimers, each one formed by a 20 kDa (Caspase-4 subunit p20) and a 10 kDa (Caspase-4 subunit p10) subunit. In terms of processing, in response to activation signals, undergoes autoproteolytic cleavage and activation.

It is found in the cytoplasm. It localises to the cytosol. The protein localises to the endoplasmic reticulum membrane. The protein resides in the mitochondrion. Its subcellular location is the inflammasome. It is found in the secreted. It carries out the reaction Strict requirement for Asp at the P1 position. It has a preferred cleavage sequence of Tyr-Val-Ala-Asp-|- but also cleaves at Asp-Glu-Val-Asp-|-.. With respect to regulation, activated by homooligomerization induced by direct binding to cytosolic LPS, in a TLR4-independent manner. In addition to LPS, CASP4/CASP11 may also be activated by oxidized phospholipid 1-palmitoyl-2-arachidonoyl- sn-glycero-3-phosphorylcholine, an oxidized phospholipid (oxPAPC), in dendritic cells, promoting adaptive immunity. The role of oxPAPC is however unclear and another report suggests that oxPAPC competes with LPS-binding and inhibits the non-canonical inflammasome in macrophages. Functionally, inflammatory caspase that acts as the effector of the non-canonical inflammasome by mediating lipopolysaccharide (LPS)-induced pyroptosis. Also indirectly activates the NLRP3 and NLRP6 inflammasomes. Acts as a thiol protease that cleaves a tetrapeptide after an Asp residue at position P1: catalyzes cleavage of CGAS, GSDMD and IL18. Effector of the non-canonical inflammasome independently of NLRP3 inflammasome and CASP1: the non-canonical inflammasome promotes pyroptosis through GSDMD cleavage without involving secretion of cytokine IL1B. In the non-canonical inflammasome, CASP4 is activated by direct binding to the lipid A moiety of LPS without the need of an upstream sensor. LPS-binding promotes CASP4 activation and CASP4-mediated cleavage of GSDMD and IL18, followed by IL18 secretion through the GSDMD pore, pyroptosis of infected cells and their extrusion into the gut lumen. Also indirectly promotes secretion of mature cytokines (IL1A and HMGB1) downstream of GSDMD-mediated pyroptosis via activation of the NLRP3 and NLRP6 inflammasomes. Involved in NLRP3-dependent CASP1 activation and IL1B secretion in response to non-canonical activators, such as UVB radiation or cholera enterotoxin. Involved in NLRP6 inflammasome-dependent activation in response to lipoteichoic acid (LTA), a cell-wall component of Gram-positive bacteria, which leads to CASP1 activation and IL1B secretion. Involved in LPS-induced IL6 secretion; this activity may not require caspase enzymatic activity. The non-canonical inflammasome is required for innate immunity to cytosolic, but not vacuolar, bacteria. Plays a crucial role in the restriction of S.typhimurium replication in colonic epithelial cells during infection. Pyroptosis limits bacterial replication, while cytokine secretion promotes the recruitment and activation of immune cells and triggers mucosal inflammation. May also act as an activator of adaptive immunity in dendritic cells, following activation by oxidized phospholipid 1-palmitoyl-2-arachidonoyl- sn-glycero-3-phosphorylcholine, an oxidized phospholipid (oxPAPC). Cleavage of GSDMD is not strictly dependent on the consensus cleavage site but depends on an exosite interface on CASP4 that recognizes and binds the Gasdermin-D, C-terminal (GSDMD-CT) part. Catalyzes cleavage and maturation of IL18; IL18 processing also depends of the exosite interface on CASP4. In contrast, it does not directly process IL1B. During non-canonical inflammasome activation, cuts CGAS and may play a role in the regulation of antiviral innate immune activation. In Bos taurus (Bovine), this protein is Caspase-4 (CASP4).